Here is a 275-residue protein sequence, read N- to C-terminus: Large ribosomal subunit protein uL2 (275 aa).

Positions 225 to 275 (MNPVDHPHGGGEGRSPIGRPPVTPWGKPALGTRTRNKKKASSKLIVKRRTK) are disordered. The span at 258–275 (TRNKKKASSKLIVKRRTK) shows a compositional bias: basic residues.

It belongs to the universal ribosomal protein uL2 family. In terms of assembly, part of the 50S ribosomal subunit. Forms a bridge to the 30S subunit in the 70S ribosome.

One of the primary rRNA binding proteins. Required for association of the 30S and 50S subunits to form the 70S ribosome, for tRNA binding and peptide bond formation. It has been suggested to have peptidyltransferase activity; this is somewhat controversial. Makes several contacts with the 16S rRNA in the 70S ribosome. This Desulforudis audaxviator (strain MP104C) protein is Large ribosomal subunit protein uL2.